The primary structure comprises 26 residues: Conotoxin Eb6.18 (26 aa).

Intrachain disulfides connect cysteine 7/cysteine 18 and cysteine 13/cysteine 25.

The protein belongs to the conotoxin O1 superfamily. As to expression, expressed by the venom duct.

The protein localises to the secreted. This chain is Conotoxin Eb6.18 (E1), found in Conus ebraeus (Hebrew cone).